Here is a 197-residue protein sequence, read N- to C-terminus: MEKFTTYTGVGVPLQRSNVDTDQIIPAVYLKRVTRTGFEDGLFSNWRQNDPNFVLNTDTYKNGSVLVAGPDFGTGSSREHAVWALMDYGFRAVFSSRFADIFRGNSGKAGMLTGIMEQSDIELLWKLMEQTPGLELTVNLEKQIVTAGDVVISFEVDPYIRWRLMEGLDDAGLTLRKLDEIEDYEAKRPAFKPRTNA.

This sequence belongs to the LeuD family. LeuD type 1 subfamily. Heterodimer of LeuC and LeuD.

It carries out the reaction (2R,3S)-3-isopropylmalate = (2S)-2-isopropylmalate. Its pathway is amino-acid biosynthesis; L-leucine biosynthesis; L-leucine from 3-methyl-2-oxobutanoate: step 2/4. In terms of biological role, catalyzes the isomerization between 2-isopropylmalate and 3-isopropylmalate, via the formation of 2-isopropylmaleate. This is 3-isopropylmalate dehydratase small subunit from Corynebacterium glutamicum (strain ATCC 13032 / DSM 20300 / JCM 1318 / BCRC 11384 / CCUG 27702 / LMG 3730 / NBRC 12168 / NCIMB 10025 / NRRL B-2784 / 534).